Reading from the N-terminus, the 146-residue chain is Large ribosomal subunit protein bL17 (146 aa).

A disordered region spans residues 118–146; that stretch reads RDPAAKGQDSGPKPEVASDEDEAGEAAAA. A compositionally biased stretch (acidic residues) spans 134 to 146; that stretch reads ASDEDEAGEAAAA.

The protein belongs to the bacterial ribosomal protein bL17 family. As to quaternary structure, part of the 50S ribosomal subunit. Contacts protein L32.

In Acidiphilium cryptum (strain JF-5), this protein is Large ribosomal subunit protein bL17.